A 181-amino-acid chain; its full sequence is Adenine phosphoribosyltransferase (181 aa).

It belongs to the purine/pyrimidine phosphoribosyltransferase family. As to quaternary structure, homodimer.

The protein resides in the cytoplasm. It catalyses the reaction AMP + diphosphate = 5-phospho-alpha-D-ribose 1-diphosphate + adenine. Its pathway is purine metabolism; AMP biosynthesis via salvage pathway; AMP from adenine: step 1/1. In terms of biological role, catalyzes a salvage reaction resulting in the formation of AMP, that is energically less costly than de novo synthesis. This is Adenine phosphoribosyltransferase from Rhodopseudomonas palustris (strain ATCC BAA-98 / CGA009).